A 181-amino-acid polypeptide reads, in one-letter code: MSISESYAKEIKTAFRQFTDFPIEGEQFEDFLPIIGNPTLFQKLVHTFKTHLEEKFGKEKIDFIAGIEARGLLFGPSLALALGVGFVPIRRVGKLPGECASITFTKLDHEEIFEMQVEAIPFDSNVVVVDDVLATGGTAYAAGDLIRQVGAHILEYDFVLVLDSLHGEEKLSAPIFSILHS.

Ser2 carries the N-acetylserine modification.

The protein belongs to the purine/pyrimidine phosphoribosyltransferase family.

It is found in the cytoplasm. The enzyme catalyses AMP + diphosphate = 5-phospho-alpha-D-ribose 1-diphosphate + adenine. It participates in purine metabolism; AMP biosynthesis via salvage pathway; AMP from adenine: step 1/1. In terms of biological role, catalyzes a salvage reaction resulting in the formation of AMP, that is energically less costly than de novo synthesis. May lack catalytic activity. In Saccharomyces cerevisiae (strain ATCC 204508 / S288c) (Baker's yeast), this protein is Adenine phosphoribosyltransferase 2 (APT2).